We begin with the raw amino-acid sequence, 179 residues long: Large ribosomal subunit protein uL5 (179 aa).

It belongs to the universal ribosomal protein uL5 family. Part of the 50S ribosomal subunit; part of the 5S rRNA/L5/L18/L25 subcomplex. Contacts the 5S rRNA and the P site tRNA. Forms a bridge to the 30S subunit in the 70S ribosome.

Functionally, this is one of the proteins that bind and probably mediate the attachment of the 5S RNA into the large ribosomal subunit, where it forms part of the central protuberance. In the 70S ribosome it contacts protein S13 of the 30S subunit (bridge B1b), connecting the 2 subunits; this bridge is implicated in subunit movement. Contacts the P site tRNA; the 5S rRNA and some of its associated proteins might help stabilize positioning of ribosome-bound tRNAs. The protein is Large ribosomal subunit protein uL5 of Dictyoglomus thermophilum (strain ATCC 35947 / DSM 3960 / H-6-12).